A 201-amino-acid polypeptide reads, in one-letter code: Prostamide/prostaglandin F synthase (201 aa).

It belongs to the peroxiredoxin-like PRXL2 family. Prostamide/prostaglandin F synthase subfamily.

It localises to the cytoplasm. It is found in the cytosol. It carries out the reaction prostaglandin H2 + [thioredoxin]-dithiol = prostaglandin F2alpha + [thioredoxin]-disulfide. It catalyses the reaction prostamide F2alpha + [thioredoxin]-disulfide = prostamide H2 + [thioredoxin]-dithiol. Functionally, catalyzes the reduction of prostaglandin-ethanolamide H(2) (prostamide H(2)) to prostamide F(2alpha) with NADPH as proton donor. Also able to reduce prostaglandin H(2) to prostaglandin F(2alpha). The chain is Prostamide/prostaglandin F synthase (prxl2b) from Xenopus tropicalis (Western clawed frog).